A 167-amino-acid polypeptide reads, in one-letter code: Urease accessory protein UreE (167 aa).

Residues 137–158 (EAGAYQSAPHGHSHSHAHGHDH) are disordered.

This sequence belongs to the UreE family.

The protein localises to the cytoplasm. In terms of biological role, involved in urease metallocenter assembly. Binds nickel. Probably functions as a nickel donor during metallocenter assembly. This chain is Urease accessory protein UreE, found in Pseudomonas putida (strain ATCC 700007 / DSM 6899 / JCM 31910 / BCRC 17059 / LMG 24140 / F1).